The following is a 319-amino-acid chain: MTILAWCIAWVLDFIIGDPQHWPHPVRWIGRLITFVQRIVRRYCPGDKALRIGGGVMWVVVVGVTWGVAWGVLALAQRIHPWFGWSVEVWMIFTTLAGRSLARAAQEVERPLRENDLAESRIKLSWIVGRDTSQLQPAQIYRAVVETVAENTVDGIIAPLFFLFLGGAPLAMAYKAVNTLDSMVGYKHEKYRAIGMVSARMDDVANYLPARLSWLLLGIAAGLCRLSGWRALRIGWRDRYNHSSPNCAWSEACVAGALGIQLGGPNNYFGERVDKPWIGDAQRGISVDDISRTIRLMWVASTLALALFIAARCGLSGVA.

Helical transmembrane passes span 52-74 (IGGG…GVLA), 79-101 (IHPW…GRSL), 155-177 (GIIA…YKAV), 207-229 (YLPA…LSGW), and 296-318 (LMWV…LSGV).

This sequence belongs to the CobD/CbiB family.

The protein localises to the cell membrane. Its pathway is cofactor biosynthesis; adenosylcobalamin biosynthesis; adenosylcobalamin from cob(II)yrinate a,c-diamide: step 4/7. Functionally, converts cobyric acid to cobinamide by the addition of aminopropanol on the F carboxylic group. However, the true cosubstrate could be (R)-1-amino-2-propanol O-2-phosphate, leading to cobinamide phosphate. The chain is Cobalamin biosynthesis protein CbiB from Salmonella typhi.